Consider the following 358-residue polypeptide: Peptide chain release factor 1 (358 aa).

Q233 is subject to N5-methylglutamine.

This sequence belongs to the prokaryotic/mitochondrial release factor family. Post-translationally, methylated by PrmC. Methylation increases the termination efficiency of RF1.

The protein localises to the cytoplasm. Its function is as follows. Peptide chain release factor 1 directs the termination of translation in response to the peptide chain termination codons UAG and UAA. The polypeptide is Peptide chain release factor 1 (Clostridium botulinum (strain ATCC 19397 / Type A)).